A 42-amino-acid polypeptide reads, in one-letter code: Cytochrome b6-f complex subunit 7 (42 aa).

Residues 15–35 (IVTAAVTCIFMVLFGLSLGFA) traverse the membrane as a helical segment.

The protein belongs to the PetM family. As to quaternary structure, the 4 large subunits of the cytochrome b6-f complex are cytochrome b6, subunit IV (17 kDa polypeptide, PetD), cytochrome f and the Rieske protein, while the 4 small subunits are PetG, PetL, PetM and PetN. The complex functions as a dimer.

Its subcellular location is the plastid. It localises to the chloroplast thylakoid membrane. Functionally, component of the cytochrome b6-f complex, which mediates electron transfer between photosystem II (PSII) and photosystem I (PSI), cyclic electron flow around PSI, and state transitions. In Trieres chinensis (Marine centric diatom), this protein is Cytochrome b6-f complex subunit 7.